A 348-amino-acid chain; its full sequence is UDP-glucose 4-epimerase (348 aa).

Residues Gly-12–Ile-14, Asp-33–Asn-37, Asp-66–Ile-67, Phe-88, and Lys-92 contribute to the NAD(+) site. Ser-132–Thr-134 provides a ligand contact to substrate. Tyr-157 functions as the Proton acceptor in the catalytic mechanism. NAD(+) is bound by residues Lys-161 and Tyr-185. Substrate-binding positions include Tyr-185–Asn-187, Asn-206–Leu-208, Asn-224–Phe-226, Arg-239, and Arg-300–Asp-303.

This sequence belongs to the NAD(P)-dependent epimerase/dehydratase family. Homodimer. Requires NAD(+) as cofactor.

It carries out the reaction UDP-alpha-D-glucose = UDP-alpha-D-galactose. The catalysed reaction is UDP-N-acetyl-alpha-D-glucosamine = UDP-N-acetyl-alpha-D-galactosamine. It participates in carbohydrate metabolism; galactose metabolism. Its function is as follows. Catalyzes two distinct but analogous reactions: the reversible epimerization of UDP-glucose to UDP-galactose and the reversible epimerization of UDP-N-acetylglucosamine to UDP-N-acetylgalactosamine. The reaction with UDP-Gal plays a critical role in the Leloir pathway of galactose catabolism in which galactose is converted to the glycolytic intermediate glucose 6-phosphate. It contributes to the catabolism of dietary galactose and enables the endogenous biosynthesis of both UDP-Gal and UDP-GalNAc when exogenous sources are limited. Both UDP-sugar interconversions are important in the synthesis of glycoproteins and glycolipids. The polypeptide is UDP-glucose 4-epimerase (Homo sapiens (Human)).